An 874-amino-acid polypeptide reads, in one-letter code: Probable cation-transporting P-type ATPase (874 aa).

The Cytoplasmic segment spans residues 1-41 (MNSWTGLSEQAAIKSRQEHGANFLPEKKATPFWLLFLQQFK). A helical transmembrane segment spans residues 42–62 (SLVVILLLLASLLSFVVAIVS). Residues 63–79 (GLRSNWNFNHDLIIEWV) are Extracellular-facing. Residues 80–100 (QPFIILLTVFANSLIGSIQEF) form a helical membrane-spanning segment. Residues 101-237 (KAQKSASALK…TKLSPLQQKL (137 aa)) lie on the Cytoplasmic side of the membrane. The helical transmembrane segment at 238–257 (EKIGKWFSWFGLGLFAVVFL) threads the bilayer. Topologically, residues 258–275 (VQTALLGFDNFTNNWSIA) are extracellular. Residues 276–293 (LIGAIALVVAIIPEGLVT) traverse the membrane as a helical segment. The Cytoplasmic portion of the chain corresponds to 294 to 644 (FINVIFALSV…EEGRKTFLTC (351 aa)). Aspartate 331 (4-aspartylphosphate intermediate) is an active-site residue. Mg(2+)-binding residues include aspartate 589 and aspartate 593. A helical transmembrane segment spans residues 645–664 (KRVLLNLFLTSIAGTVVVLL). At 665–687 (GLFILGQVFKTNLLQQGHDFQVF) the chain is on the extracellular side. Residues 688–708 (SPTQLLIINLFVHGFPAVALA) form a helical membrane-spanning segment. The Cytoplasmic segment spans residues 709–726 (VQPVKEKLMVGSFSTKNL). The chain crosses the membrane as a helical span at residues 727–749 (FYNRQGFDLIWQSLFLSFLTLLF). Residues 750–770 (YSLGIIYAINNRDLQTSGDLI) are Extracellular-facing. A helical membrane pass occupies residues 771 to 790 (NRAGSTCGFFILGASAALNS). Topologically, residues 791-803 (LNLMVDKPLLMTN) are cytoplasmic. A helical membrane pass occupies residues 804 to 826 (PWFFKLVWIGSLASILVFLLIIF). The Extracellular segment spans residues 827–844 (INPLGLVFNVLQDLTNHP). Residues 845–865 (VLISYSFGGVILYMGMNEVVK) traverse the membrane as a helical segment. Topologically, residues 866–874 (LIRLGYGNI) are cytoplasmic.

The protein belongs to the cation transport ATPase (P-type) (TC 3.A.3) family. Type II subfamily.

It is found in the cell membrane. It carries out the reaction ATP + H2O = ADP + phosphate + H(+). In terms of biological role, could mediate calcium influx. This is Probable cation-transporting P-type ATPase (pacL) from Mycoplasma genitalium (strain ATCC 33530 / DSM 19775 / NCTC 10195 / G37) (Mycoplasmoides genitalium).